The chain runs to 88 residues: RNA-binding protein Hfq (88 aa).

The region spanning 9–68 (DPYLNVLRKERVPVSIYLVNGIKLQGQVESFDQFVVLLKNTVSQMVYKHAISTVVPSRAV) is the Sm domain.

Belongs to the Hfq family. As to quaternary structure, homohexamer.

In terms of biological role, RNA chaperone that binds small regulatory RNA (sRNAs) and mRNAs to facilitate mRNA translational regulation in response to envelope stress, environmental stress and changes in metabolite concentrations. Also binds with high specificity to tRNAs. This chain is RNA-binding protein Hfq, found in Cellvibrio japonicus (strain Ueda107) (Pseudomonas fluorescens subsp. cellulosa).